The following is a 34-amino-acid chain: Photosystem II reaction center protein M (34 aa).

A helical transmembrane segment spans residues 5-25 (ILAFIATALFILVPTAFLLII).

Belongs to the PsbM family. As to quaternary structure, PSII is composed of 1 copy each of membrane proteins PsbA, PsbB, PsbC, PsbD, PsbE, PsbF, PsbH, PsbI, PsbJ, PsbK, PsbL, PsbM, PsbT, PsbX, PsbY, PsbZ, Psb30/Ycf12, at least 3 peripheral proteins of the oxygen-evolving complex and a large number of cofactors. It forms dimeric complexes.

The protein resides in the plastid. It localises to the chloroplast thylakoid membrane. One of the components of the core complex of photosystem II (PSII). PSII is a light-driven water:plastoquinone oxidoreductase that uses light energy to abstract electrons from H(2)O, generating O(2) and a proton gradient subsequently used for ATP formation. It consists of a core antenna complex that captures photons, and an electron transfer chain that converts photonic excitation into a charge separation. This subunit is found at the monomer-monomer interface. This is Photosystem II reaction center protein M from Cenchrus americanus (Pearl millet).